The chain runs to 1262 residues: Histone-lysine N-methyltransferase eggless (1262 aa).

Residues 1 to 194 (MSGQPTAVDC…MEVDQDVEES (194 aa)) are disordered. 3 stretches are compositionally biased toward basic and acidic residues: residues 26-41 (ASRE…KGEN), 50-61 (AAKDVEIEELTH), and 81-99 (APDE…KGEN). Low complexity predominate over residues 157 to 166 (SSISSPTSES). Over residues 167–179 (FPEKDEKTNKENE) the composition is skewed to basic and acidic residues. The residue at position 215 (Ser-215) is a Phosphoserine. Position 217 is a phosphothreonine (Thr-217). Positions 353-420 (EKSDFSKNKL…LEKVQTTADK (68 aa)) form a coiled coil. 2 consecutive Tudor domains span residues 529 to 602 (RLTI…SEKV) and 629 to 686 (QCTR…RETQ). Residues 743–764 (SSAATPAGGRTNAGGVSTSNSA) are disordered. Residues 818 to 884 (LDSYSPLAKP…DNFDFTPDLK (67 aa)) form the MBD domain. A Pre-SET domain is found at 946-1018 (LCCDCEDDCS…NCLNRVVQFS (73 aa)). Zn(2+) is bound by residues Cys-948, Cys-950, Cys-954, Cys-960, Cys-962, Cys-1000, Cys-1004, Cys-1006, and Cys-1010. In terms of domain architecture, SET spans 1021–1237 (MKLQVFKTSN…SGTELTWNYN (217 aa)). S-adenosyl-L-methionine-binding positions include 1031–1033 (RGW), Asp-1069, and Tyr-1071. A compositionally biased stretch (basic and acidic residues) spans 1086-1097 (EGYESEVDHSDP). The segment at 1086–1148 (EGYESEVDHS…QSSELDSQER (63 aa)) is disordered. Positions 1098–1113 (DAEEDNGGPDAEDDDD) are enriched in acidic residues. Residues 1129-1141 (RSGSTQNSSTQSS) show a composition bias toward low complexity. Residues Arg-1191 and 1194–1195 (NH) contribute to the S-adenosyl-L-methionine site. Residues Cys-1197, Cys-1250, Cys-1252, and Cys-1257 each contribute to the Zn(2+) site. The Post-SET domain occupies 1246–1262 (KVLYCQCGAPNCRLRLL).

It belongs to the class V-like SAM-binding methyltransferase superfamily. Histone-lysine methyltransferase family. Suvar3-9 subfamily. In terms of tissue distribution, expressed in ovary (at protein level).

It localises to the nucleus. Its subcellular location is the chromosome. The enzyme catalyses L-lysyl(9)-[histone H3] + 3 S-adenosyl-L-methionine = N(6),N(6),N(6)-trimethyl-L-lysyl(9)-[histone H3] + 3 S-adenosyl-L-homocysteine + 3 H(+). Functionally, histone methyltransferase that specifically trimethylates 'Lys-10' of histone H3 (H3K9me3) in ovary. H3K9me3 represents a specific tag for epigenetic transcriptional repression by recruiting Su(var)205/HP1 to methylated histones. Plays a central role during oogenesis. This Drosophila melanogaster (Fruit fly) protein is Histone-lysine N-methyltransferase eggless (egg).